The primary structure comprises 75 residues: Carwaprin-a (75 aa).

The signal sequence occupies residues 1 to 24 (MSSGGLLLLLGLLTLWAELTPISG). Residues 27-72 (RPKKPGLCPPRPQKPPCVRECKNDWRCPGEQKCCRYGCIYECRDPI) enclose the WAP domain. 4 disulfides stabilise this stretch: Cys34/Cys60, Cys43/Cys64, Cys47/Cys59, and Cys53/Cys68.

This sequence belongs to the venom waprin family. In terms of tissue distribution, expressed by the venom gland.

Its subcellular location is the secreted. In terms of biological role, damages membranes of susceptible bacteria. Has no hemolytic activity. Not toxic to mice. Does not inhibit the proteinases elastase and cathepsin G. The sequence is that of Carwaprin-a from Tropidechis carinatus (Australian rough-scaled snake).